An 82-amino-acid polypeptide reads, in one-letter code: Omega-conotoxin-like Am6.2 (82 aa).

Positions methionine 1 to alanine 22 are cleaved as a signal peptide. A propeptide spanning residues valine 23 to arginine 52 is cleaved from the precursor. 3 disulfides stabilise this stretch: cysteine 56-cysteine 73, cysteine 63-cysteine 77, and cysteine 72-cysteine 81. Tryptophan 76 is modified (6'-bromotryptophan; partial; in Am6.2b (major form)).

The protein belongs to the conotoxin O1 family. In terms of processing, mostly non-hydroxylated. Post-translationally, two forms of this peptides have been described. Am6.2a (Am3136) is not unmodified, while Am6.2b (Am3214) is Trp-76 brominated. Both forms are found in venom with a much more abundant brominated form. In terms of tissue distribution, expressed by the venom duct.

It localises to the secreted. In terms of biological role, omega-conotoxins act at presynaptic membranes, they bind and block voltage-gated calcium channels (Cav). This is Omega-conotoxin-like Am6.2 from Conus amadis (Amadis cone).